Reading from the N-terminus, the 300-residue chain is Acetylglutamate kinase (300 aa).

Residues 73–74, arginine 95, and asparagine 197 each bind substrate; that span reads GG.

The protein belongs to the acetylglutamate kinase family. ArgB subfamily.

The protein resides in the cytoplasm. It carries out the reaction N-acetyl-L-glutamate + ATP = N-acetyl-L-glutamyl 5-phosphate + ADP. It functions in the pathway amino-acid biosynthesis; L-arginine biosynthesis; N(2)-acetyl-L-ornithine from L-glutamate: step 2/4. Its function is as follows. Catalyzes the ATP-dependent phosphorylation of N-acetyl-L-glutamate. The sequence is that of Acetylglutamate kinase from Bordetella pertussis (strain Tohama I / ATCC BAA-589 / NCTC 13251).